The chain runs to 380 residues: tRNA-specific 2-thiouridylase MnmA (380 aa).

ATP contacts are provided by residues G12 to S19 and M38. The tract at residues N108–D110 is interaction with target base in tRNA. C113 functions as the Nucleophile in the catalytic mechanism. The cysteines at positions 113 and 210 are disulfide-linked. G138 contributes to the ATP binding site. Residues K160–Q162 are interaction with tRNA. Residue C210 is the Cysteine persulfide intermediate of the active site.

This sequence belongs to the MnmA/TRMU family.

The protein localises to the cytoplasm. The catalysed reaction is S-sulfanyl-L-cysteinyl-[protein] + uridine(34) in tRNA + AH2 + ATP = 2-thiouridine(34) in tRNA + L-cysteinyl-[protein] + A + AMP + diphosphate + H(+). Functionally, catalyzes the 2-thiolation of uridine at the wobble position (U34) of tRNA, leading to the formation of s(2)U34. This chain is tRNA-specific 2-thiouridylase MnmA, found in Ureaplasma urealyticum serovar 10 (strain ATCC 33699 / Western).